Reading from the N-terminus, the 148-residue chain is Large ribosomal subunit protein bL9 (148 aa).

Belongs to the bacterial ribosomal protein bL9 family.

Functionally, binds to the 23S rRNA. This chain is Large ribosomal subunit protein bL9, found in Bifidobacterium adolescentis (strain ATCC 15703 / DSM 20083 / NCTC 11814 / E194a).